The following is a 448-amino-acid chain: Tubulin beta-1 chain (448 aa).

Q11, E72, S141, G145, T146, G147, N207, and N229 together coordinate GTP. E72 contributes to the Mg(2+) binding site. Positions Q424 to E448 are disordered. A compositionally biased stretch (acidic residues) spans G430–E448.

The protein belongs to the tubulin family. In terms of assembly, dimer of alpha and beta chains. A typical microtubule is a hollow water-filled tube with an outer diameter of 25 nm and an inner diameter of 15 nM. Alpha-beta heterodimers associate head-to-tail to form protofilaments running lengthwise along the microtubule wall with the beta-tubulin subunit facing the microtubule plus end conferring a structural polarity. Microtubules usually have 13 protofilaments but different protofilament numbers can be found in some organisms and specialized cells. It depends on Mg(2+) as a cofactor.

The protein resides in the cytoplasm. It localises to the cytoskeleton. In terms of biological role, tubulin is the major constituent of microtubules, a cylinder consisting of laterally associated linear protofilaments composed of alpha- and beta-tubulin heterodimers. Microtubules grow by the addition of GTP-tubulin dimers to the microtubule end, where a stabilizing cap forms. Below the cap, tubulin dimers are in GDP-bound state, owing to GTPase activity of alpha-tubulin. This is Tubulin beta-1 chain (TUB1) from Colletotrichum gloeosporioides (Anthracnose fungus).